The primary structure comprises 651 residues: Histone-arginine methyltransferase CARM1 (651 aa).

Positions 28–139 (ATVSVFPGAR…GHTLERSVFS (112 aa)) are interaction with C9orf72. Residues 147 to 454 (AVQYFQFYGY…KRQSYDISIV (308 aa)) enclose the SAM-dependent MTase PRMT-type domain. Residues Q160, R169, G193, and E215 each coordinate S-adenosyl-L-methionine. Phosphoserine is present on S217. K228 participates in a covalent cross-link: Glycyl lysine isopeptide (Lys-Gly) (interchain with G-Cter in ubiquitin). Positions 244 and 272 each coordinate S-adenosyl-L-methionine. The segment at 347–380 (RILMAKSVKYTVNFLEAKEGDLHRIEIPFKFHML) is required for nuclear translocation. The segment at 500–651 (TGSTYNLSSG…IPTNTMHYGS (152 aa)) is transactivation domain. Residue R551 is modified to Dimethylated arginine. The disordered stretch occupies residues 581–617 (RSSYQWGPGRLRGHAGSSVPMTCPTGSSGAQGGGGSS).

Belongs to the class I-like SAM-binding methyltransferase superfamily. Protein arginine N-methyltransferase family. In terms of assembly, homodimer. Interacts with NR1H4. Interacts with SNRPC. Interacts with the C-terminus of NCOA2/GRIP1, NCO3/ACTR and NCOA1/SRC1. Part of a complex consisting of CARM1, EP300/P300 and NCOA2/GRIP1. Interacts with FLII, TP53, myogenic factor MEF2, EP300/P300, TRIM24, CREBBP and CTNNB1. Interacts with RELA. Identified in a complex containing CARM1, TRIM24 and NCOA2/GRIP1. Interacts with NCOA3/SRC3. Interacts with SKP2. Interacts (via PH domain-like fold) with C9orf72. Interacts with PARP1; promoting PARP1 recruimtent to replication forks. Post-translationally, auto-methylated on Arg-551. Methylation enhances transcription coactivator activity. Methylation is required for its role in the regulation of pre-mRNA alternative splicing. Phosphorylation at Ser-217 interferes with S-adenosyl-L-methionine binding and strongly reduces methyltransferase activity. Phosphorylation at Ser-217 is strongly increased during mitosis, and decreases rapidly to a very low, basal level after entry into the G1 phase of the cell cycle. Phosphorylation at Ser-217 may promote location in the cytosol. In terms of processing, ubiquitinated by E3 ubiquitin-protein ligase complex containing FBXO9 at Lys-228; leading to proteasomal degradation. As to expression, isoform 1 is expressed at low levels in brain, liver and testis. Isoform 2 is highly expressed in brain, liver, skeletal muscle and testis. In terms of tissue distribution, isoform 3 is highly expressed in spleen, liver and kidney. As to expression, isoform 4 is expressed in spleen, liver and kidney.

It localises to the nucleus. Its subcellular location is the cytoplasm. It is found in the chromosome. The enzyme catalyses L-arginyl-[protein] + 2 S-adenosyl-L-methionine = N(omega),N(omega)-dimethyl-L-arginyl-[protein] + 2 S-adenosyl-L-homocysteine + 2 H(+). With respect to regulation, methylation of H3R17 (H3R17me) by CARM1 is stimulated by preacetylation of H3 'Lys-18' (H3K18ac) H3 'Lys-23' (H3K23ac) by EP300 and blocked by citrullination of H3 'Arg-17' (H3R17ci) by PADI4. Functionally, methylates (mono- and asymmetric dimethylation) the guanidino nitrogens of arginyl residues in several proteins involved in DNA packaging, transcription regulation, pre-mRNA splicing, and mRNA stability. Recruited to promoters upon gene activation together with histone acetyltransferases from EP300/P300 and p160 families, methylates histone H3 at 'Arg-17' (H3R17me), forming mainly asymmetric dimethylarginine (H3R17me2a), leading to activation of transcription via chromatin remodeling. During nuclear hormone receptor activation and TCF7L2/TCF4 activation, acts synergically with EP300/P300 and either one of the p160 histone acetyltransferases NCOA1/SRC1, NCOA2/GRIP1 and NCOA3/ACTR or CTNNB1/beta-catenin to activate transcription. During myogenic transcriptional activation, acts together with NCOA3/ACTR as a coactivator for MEF2C. During monocyte inflammatory stimulation, acts together with EP300/P300 as a coactivator for NF-kappa-B. Acts as a coactivator for PPARG, promotes adipocyte differentiation and the accumulation of brown fat tissue. Plays a role in the regulation of pre-mRNA alternative splicing by methylation of splicing factors. Also seems to be involved in p53/TP53 transcriptional activation. Methylates EP300/P300, both at 'Arg-2142', which may loosen its interaction with NCOA2/GRIP1, and at 'Arg-580' and 'Arg-604' in the KIX domain, which impairs its interaction with CREB and inhibits CREB-dependent transcriptional activation. Also methylates arginine residues in RNA-binding proteins PABPC1, ELAVL1 and ELAV4, which may affect their mRNA-stabilizing properties and the half-life of their target mRNAs. Acts as a transcriptional coactivator of ACACA/acetyl-CoA carboxylase by enriching H3R17 methylation at its promoter, thereby positively regulating fatty acid synthesis. Independently of its methyltransferase activity, involved in replication fork progression: promotes PARP1 recruitment to replication forks, leading to poly-ADP-ribosylation of chromatin at replication forks and reduced fork speed. In terms of biological role, isoform 3 specifically affects pre-mRNA splicing. This activity is independent from methyltransferase activity. The sequence is that of Histone-arginine methyltransferase CARM1 (Carm1) from Rattus norvegicus (Rat).